The following is a 513-amino-acid chain: Flagellin A (513 aa).

The protein belongs to the bacterial flagellin family. Heteromer of FlaA and FlaB. FlaB is located proximal to the hook while the remainder of the filament is composed of the predominant FlaA.

It localises to the secreted. The protein localises to the bacterial flagellum. Functionally, flagellin is the subunit protein which polymerizes to form the filaments of bacterial flagella. Important for motility and virulence. The chain is Flagellin A (flaA) from Helicobacter felis (strain ATCC 49179 / CCUG 28539 / NCTC 12436 / CS1).